A 708-amino-acid polypeptide reads, in one-letter code: Leukotoxin translocation ATP-binding protein LktB (708 aa).

Residues 1-126 (MEANHQRNDL…ACYQGQLILV (126 aa)) form the Peptidase C39 domain. Residues 155 to 437 (FLETLIVSIF…LAQLWQDFQQ (283 aa)) form the ABC transmembrane type-1 domain. The next 5 helical transmembrane spans lie at 159–179 (LIVSIFLQIFALITPLFFQVV), 192–212 (LNIITVALAIVIIFEIVLSGL), 270–290 (ALTSVLDLLFSFIFFAVMWYY), 296–316 (LVILGSLPCYILWSIFISPIL), and 389–409 (VMVINLWLGAHLVISGDLSIG). The region spanning 469–704 (ISFKNIRFRY…SNGLYSYLHQ (236 aa)) is the ABC transporter domain. 503-510 (GRSGSGKS) contributes to the ATP binding site.

The protein belongs to the ABC transporter superfamily. Protein-1 exporter (TC 3.A.1.109) family. As to quaternary structure, homodimer.

It localises to the cell inner membrane. It carries out the reaction ATP + H2O + proteinSide 1 = ADP + phosphate + proteinSide 2.. Part of the ABC transporter complex LktBD involved in leukotoxin export. Transmembrane domains (TMD) form a pore in the inner membrane and the ATP-binding domain (NBD) is responsible for energy generation. This is Leukotoxin translocation ATP-binding protein LktB (lktB) from Mannheimia haemolytica (Pasteurella haemolytica).